Reading from the N-terminus, the 334-residue chain is Transposase for insertion sequence element IS1328 (334 aa).

This sequence belongs to the transposase IS1111A/IS1328/IS1533 family.

In terms of biological role, required for the transposition of the insertion element. This Yersinia enterocolitica protein is Transposase for insertion sequence element IS1328.